Reading from the N-terminus, the 705-residue chain is Polyribonucleotide nucleotidyltransferase (705 aa).

D487 and D493 together coordinate Mg(2+). A KH domain is found at 554 to 613 (PKILTMSINPDKIRDVIGPSGKQINKIIEDTGVKIDIEQDGTIFISSTDESMNQKAKKII). Positions 623-691 (GQLYLGKVKR…KQGRVNLSRK (69 aa)) constitute an S1 motif domain.

The protein belongs to the polyribonucleotide nucleotidyltransferase family. Requires Mg(2+) as cofactor.

It localises to the cytoplasm. The enzyme catalyses RNA(n+1) + phosphate = RNA(n) + a ribonucleoside 5'-diphosphate. Involved in mRNA degradation. Catalyzes the phosphorolysis of single-stranded polyribonucleotides processively in the 3'- to 5'-direction. This is Polyribonucleotide nucleotidyltransferase from Bacillus licheniformis (strain ATCC 14580 / DSM 13 / JCM 2505 / CCUG 7422 / NBRC 12200 / NCIMB 9375 / NCTC 10341 / NRRL NRS-1264 / Gibson 46).